The primary structure comprises 671 residues: Carbohydrate acetyl esterase/feruloyl esterase (671 aa).

A signal peptide spans 1-24 (MYQSTLKTILLASALLILPASMSA). Residues 1 to 296 (MYQSTLKTIL…YGEAVARHLG (296 aa)) form a carbohydrate acetyl esterase region. Active-site for acetyl esterase activity residues include Ser55, Asp271, and His274. The tract at residues 297 to 671 (YEPKRPYIEM…NEFIPHLFKK (375 aa)) is feruloyl esterase.

In the N-terminal section; belongs to the carbohydrate esterase 6 family.

It catalyses the reaction feruloyl-polysaccharide + H2O = ferulate + polysaccharide.. It participates in glycan degradation; xylan degradation. Involved in degradation of plant cell wall polysaccharides. Bifunctional esterase that possesses both acetyl esterase and ferulic acid esterase activities. Has deacetylase activity towards acetylated xylo-oligosaccharides smaller than xylo-heptaose, as well as from glucose-pentaacetate. Is also able to release ferulic acid from methylferulate, and from the more natural substrates wheat bran, corn fiber, and XOS(FA,Ac), a corn fiber-derived substrate enriched in O-acetyl and ferulic acid esters. This is Carbohydrate acetyl esterase/feruloyl esterase from Xylanibacter ruminicola (strain ATCC 19189 / DSM 19721 / CIP 105475 / JCM 8958 / 23) (Prevotella ruminicola).